The following is a 497-amino-acid chain: Cytochrome P450 71A20 (497 aa).

Residues methionine 3–lysine 23 traverse the membrane as a helical segment. Cysteine 440 contacts heme.

This sequence belongs to the cytochrome P450 family. Heme is required as a cofactor.

The protein resides in the membrane. The chain is Cytochrome P450 71A20 (CYP71A20) from Arabidopsis thaliana (Mouse-ear cress).